The chain runs to 126 residues: Methylglyoxal synthase (126 aa).

Residues 1-126 enclose the MGS-like domain; sequence MAGGKCIALI…AERLIKTLNH (126 aa). Substrate is bound by residues His12, Lys16, 38-41, and 59-60; these read TGTT and SG. Asp65 functions as the Proton donor/acceptor in the catalytic mechanism. His92 serves as a coordination point for substrate.

This sequence belongs to the methylglyoxal synthase family.

The catalysed reaction is dihydroxyacetone phosphate = methylglyoxal + phosphate. Catalyzes the formation of methylglyoxal from dihydroxyacetone phosphate. This Rhizobium rhizogenes (strain K84 / ATCC BAA-868) (Agrobacterium radiobacter) protein is Methylglyoxal synthase.